A 173-amino-acid polypeptide reads, in one-letter code: DNA-directed RNA polymerase subunit delta (173 aa).

The region spanning 14-81 (MALVEIAHEL…SDQTWGLRSW (68 aa)) is the HTH HARE-type domain. The segment at 110–173 (LDLDEFEEID…DYDDEEEEIK (64 aa)) is disordered.

This sequence belongs to the RpoE family. In terms of assembly, RNAP is composed of a core of 2 alpha, a beta and a beta' subunit. The core is associated with a delta subunit, and at least one of epsilon or omega. When a sigma factor is associated with the core the holoenzyme is formed, which can initiate transcription.

Its function is as follows. Participates in both the initiation and recycling phases of transcription. In the presence of the delta subunit, RNAP displays an increased specificity of transcription, a decreased affinity for nucleic acids, and an increased efficiency of RNA synthesis because of enhanced recycling. May function in sigma factor switching. It displaces RNA bound to RNA polymerase in a binary complex. The chain is DNA-directed RNA polymerase subunit delta from Bacillus subtilis (strain 168).